We begin with the raw amino-acid sequence, 556 residues long: Phenylalanine--tRNA ligase beta subunit (556 aa).

In terms of domain architecture, B5 spans 278–353 (LTPKRFEVEL…IAYGYNNIEP (76 aa)). Mg(2+)-binding residues include Asp-331, Asp-337, Glu-340, and Asp-341.

This sequence belongs to the phenylalanyl-tRNA synthetase beta subunit family. Type 2 subfamily. Tetramer of two alpha and two beta subunits. The cofactor is Mg(2+).

The protein localises to the cytoplasm. It catalyses the reaction tRNA(Phe) + L-phenylalanine + ATP = L-phenylalanyl-tRNA(Phe) + AMP + diphosphate + H(+). The polypeptide is Phenylalanine--tRNA ligase beta subunit (Pyrococcus abyssi (strain GE5 / Orsay)).